The following is a 733-amino-acid chain: Phosphoribosylformylglycinamidine synthase subunit PurL (733 aa).

His44 is an active-site residue. ATP-binding residues include Tyr47 and Lys86. Residue Glu88 participates in Mg(2+) binding. Residues 89–92 (SHNH) and Arg111 contribute to the substrate site. His90 functions as the Proton acceptor in the catalytic mechanism. Asp112 lines the Mg(2+) pocket. Gln233 is a substrate binding site. Asp261 contacts Mg(2+). Substrate is bound at residue 305–307 (ESQ). ATP contacts are provided by Asp492 and Gly529. Asn530 is a Mg(2+) binding site. Position 532 (Ser532) interacts with substrate.

This sequence belongs to the FGAMS family. As to quaternary structure, monomer. Part of the FGAM synthase complex composed of 1 PurL, 1 PurQ and 2 PurS subunits.

It is found in the cytoplasm. The enzyme catalyses N(2)-formyl-N(1)-(5-phospho-beta-D-ribosyl)glycinamide + L-glutamine + ATP + H2O = 2-formamido-N(1)-(5-O-phospho-beta-D-ribosyl)acetamidine + L-glutamate + ADP + phosphate + H(+). Its pathway is purine metabolism; IMP biosynthesis via de novo pathway; 5-amino-1-(5-phospho-D-ribosyl)imidazole from N(2)-formyl-N(1)-(5-phospho-D-ribosyl)glycinamide: step 1/2. Its function is as follows. Part of the phosphoribosylformylglycinamidine synthase complex involved in the purines biosynthetic pathway. Catalyzes the ATP-dependent conversion of formylglycinamide ribonucleotide (FGAR) and glutamine to yield formylglycinamidine ribonucleotide (FGAM) and glutamate. The FGAM synthase complex is composed of three subunits. PurQ produces an ammonia molecule by converting glutamine to glutamate. PurL transfers the ammonia molecule to FGAR to form FGAM in an ATP-dependent manner. PurS interacts with PurQ and PurL and is thought to assist in the transfer of the ammonia molecule from PurQ to PurL. The chain is Phosphoribosylformylglycinamidine synthase subunit PurL from Thermomicrobium roseum (strain ATCC 27502 / DSM 5159 / P-2).